The chain runs to 534 residues: Blue-light-activated protein (534 aa).

The region spanning 20-93 (GKDIFFAAVE…QSIRDAIDQR (74 aa)) is the PAS domain. Cys70 is subject to S-4a-FMN cysteine. Positions 94 to 148 (VDISTEILNYRKDGSSFWNALFISPVYNDAGELIYFFASQLDISRRRDAEEALRQ) constitute a PAC domain. The Histidine kinase domain maps to 161-390 (GIAHDFNNLL…TLRLYFPVDE (230 aa)). At His164 the chain carries Phosphohistidine; by autocatalysis. Residues 411–527 (RILIVEDRPD…DLARKVRQVL (117 aa)) enclose the Response regulatory domain. Asp461 is subject to 4-aspartylphosphate.

In terms of processing, FMN binds covalently to cysteine after exposure to blue light and this bond is spontaneously broken in the dark.

It carries out the reaction ATP + protein L-histidine = ADP + protein N-phospho-L-histidine.. Functionally, photosensitive kinase and response regulator that is involved in increased bacterial virulence upon exposure to light. The polypeptide is Blue-light-activated protein (Pseudomonas syringae pv. syringae (strain B728a)).